The primary structure comprises 231 residues: Glutathione-specific gamma-glutamylcyclotransferase (231 aa).

Residue 49–54 (IFGYGS) participates in substrate binding. The Proton acceptor role is filled by glutamate 127.

The protein belongs to the gamma-glutamylcyclotransferase family. ChaC subfamily.

The enzyme catalyses glutathione = L-cysteinylglycine + 5-oxo-L-proline. In terms of biological role, catalyzes the cleavage of glutathione into 5-oxo-L-proline and a Cys-Gly dipeptide. Acts specifically on glutathione, but not on other gamma-glutamyl peptides. The polypeptide is Glutathione-specific gamma-glutamylcyclotransferase (Escherichia coli (strain K12)).